We begin with the raw amino-acid sequence, 176 residues long: Japanin-like-RS (176 aa).

The N-terminal stretch at 1 to 24 (MKVLLCLVCSFYIIVSSITTMTTG) is a signal peptide. Cystine bridges form between C52–C174 and C138–C162. N155 is a glycosylation site (N-linked (GlcNAc...) asparagine).

Belongs to the calycin superfamily. Lipocalin family. In terms of assembly, homodimer; non-disulfide-linked. Each monomer accommodates one molecule of cholesterol in a pocket. As to expression, expressed in salivary glands.

It is found in the secreted. Salivary tick protein that modulates host immune response. This protein blocks dendritic cell (DC) differentiation from monocytes. In addition, it inhibits up-regulation of costimulatory molecules and pro-inflammatory cytokines in response to stimuli and promotes up-regulation of co-inhibitory molecules and the anti-inflammatory cytokine interleukin-10. It has a pocket to accomodate cholesterol, which may have immune-modulatory roles, either directly or through interactions with the host gut microbiota. The chain is Japanin-like-RS from Rhipicephalus sanguineus (Brown dog tick).